The primary structure comprises 150 residues: Putative pre-16S rRNA nuclease (150 aa).

It belongs to the YqgF nuclease family.

Its subcellular location is the cytoplasm. Its function is as follows. Could be a nuclease involved in processing of the 5'-end of pre-16S rRNA. In Chlamydia felis (strain Fe/C-56) (Chlamydophila felis), this protein is Putative pre-16S rRNA nuclease.